Reading from the N-terminus, the 292-residue chain is Ribosomal RNA small subunit methyltransferase A (292 aa).

S-adenosyl-L-methionine contacts are provided by N29, L31, G56, E77, D102, and N127.

It belongs to the class I-like SAM-binding methyltransferase superfamily. rRNA adenine N(6)-methyltransferase family. RsmA subfamily.

The protein resides in the cytoplasm. It catalyses the reaction adenosine(1518)/adenosine(1519) in 16S rRNA + 4 S-adenosyl-L-methionine = N(6)-dimethyladenosine(1518)/N(6)-dimethyladenosine(1519) in 16S rRNA + 4 S-adenosyl-L-homocysteine + 4 H(+). In terms of biological role, specifically dimethylates two adjacent adenosines (A1518 and A1519) in the loop of a conserved hairpin near the 3'-end of 16S rRNA in the 30S particle. May play a critical role in biogenesis of 30S subunits. The protein is Ribosomal RNA small subunit methyltransferase A of Bacillus licheniformis (strain ATCC 14580 / DSM 13 / JCM 2505 / CCUG 7422 / NBRC 12200 / NCIMB 9375 / NCTC 10341 / NRRL NRS-1264 / Gibson 46).